The chain runs to 481 residues: PTS system N-acetylmuramic acid-specific EIIBC component (481 aa).

The PTS EIIB type-1 domain occupies 1-89 (MAKITQTMMA…NALIESGDNV (89 aa)). Residue Cys28 is the Phosphocysteine intermediate; for EIIB activity of the active site. In terms of domain architecture, PTS EIIC type-1 spans 122-481 (SKFATIFTPL…FFGCKDVDLS (360 aa)). Transmembrane regions (helical) follow at residues 124–144 (FATIFTPLIPGFIAAGLLLGI), 165–185 (LVAYLKVFGKGLFAFLSILIG), 190–210 (QAFGGSGVNGAILASLFVLGY), 225–245 (FFGFAIDPRGNIIGVLLAAIL), 263–283 (MILTSVVTLLIMGAVTFLIIM), 307–327 (AAILAGLFLISVVFGIHQGFV), 342–362 (LFPILAMAGAGQVGASLALYA), 376–396 (GAIIPGILGIGEPLIYGVTLP), 406–426 (IGGAAGGFFIGLISYLGLPVG), and 448–468 (IFAGMAVFVGGLLISYTVGFA).

The protein resides in the cell inner membrane. The catalysed reaction is N-acetyl-beta-D-muramate(out) + N(pros)-phospho-L-histidyl-[protein] = N-acetyl-beta-D-muramate 6-phosphate(in) + L-histidyl-[protein]. In terms of biological role, the phosphoenolpyruvate-dependent sugar phosphotransferase system (sugar PTS), a major carbohydrate active transport system, catalyzes the phosphorylation of incoming sugar substrates concomitantly with their translocation across the cell membrane. This system is involved in N-acetylmuramic acid (MurNAc) transport, yielding cytoplasmic MurNAc-6-P. Is also able to take up anhydro-N-acetylmuramic acid (anhMurNAc), but cannot phosphorylate the carbon 6, probably because of the 1,6-anhydro ring. This is PTS system N-acetylmuramic acid-specific EIIBC component (murP) from Vibrio cholerae serotype O1 (strain ATCC 39315 / El Tor Inaba N16961).